We begin with the raw amino-acid sequence, 455 residues long: Gastric inhibitory polypeptide receptor (455 aa).

The N-terminal stretch at 1 to 18 is a signal peptide; that stretch reads MPLRLLLLLLWLWGLSLQ. Topologically, residues 19-135 are extracellular; it reads RAETDSEGQT…DQKLILERLQ (117 aa). Intrachain disulfides connect C43–C67, C58–C100, and C81–C115. N-linked (GlcNAc...) asparagine glycans are attached at residues N59, N69, and N74. The helical transmembrane segment at 136–158 threads the bilayer; it reads VVYTVGYSLSLATLLLALLILSL. At 159-166 the chain is on the cytoplasmic side; sequence FRRLHCTR. A helical transmembrane segment spans residues 167 to 186; sequence NYIHMNLFTSFMLRAGAILT. The Extracellular portion of the chain corresponds to 187–214; sequence RDQLLPPLGPYTGNQTPTLWNQALAACR. A helical transmembrane segment spans residues 215 to 239; sequence TAQILTQYCVGANYTWLLVEGVYLH. The Cytoplasmic segment spans residues 240–251; that stretch reads HLLVVVRRSEKG. A helical transmembrane segment spans residues 252–275; the sequence is HFRCYLLLGWGAPALFVIPWVIVR. Residues 276 to 290 are Extracellular-facing; the sequence is YLYENTQCWERNEVK. The helical transmembrane segment at 291-316 threads the bilayer; that stretch reads AIWWIIRTPILITILINFLIFIRILG. At 317–338 the chain is on the cytoplasmic side; sequence ILVSKLRTRQMRCPDYRLRLAR. Residues 339-359 form a helical membrane-spanning segment; the sequence is STLTLMPLLGVHEVVFAPVTE. The Extracellular segment spans residues 360–374; sequence EQAEGSLRFAKLAFE. A helical transmembrane segment spans residues 375-395; sequence IFLSSFQGFLVSVLYCFINKE. The Cytoplasmic portion of the chain corresponds to 396–455; it reads VQSEIRRLRLSLQEQCPRPHLGQAPRAVPLSSAPQEAAIRNALPSGMLHVPGDEVLESYC.

Belongs to the G-protein coupled receptor 2 family. In terms of assembly, may form homodimers and heterodimers with GLP1R. Post-translationally, N-glycosylation is required for cell surface expression and lengthens receptor half-life by preventing degradation in the ER. Present in the pancreas as well as the gut, adipose tissue, heart, pituitary, and inner layers of the adrenal cortex, whereas it is not found in kidney, spleen, or liver. It is also expressed in several brain regions, including the cerebral cortex, hippocampus, and olfactory bulb.

It localises to the cell membrane. Functionally, this is a receptor for GIP. The activity of this receptor is mediated by G proteins which activate adenylyl cyclase. This Rattus norvegicus (Rat) protein is Gastric inhibitory polypeptide receptor (Gipr).